A 492-amino-acid polypeptide reads, in one-letter code: Endoglycoceramidase I (492 aa).

The signal sequence occupies residues M1 to A14. C15 carries N-palmitoyl cysteine lipidation. C15 carries S-diacylglycerol cysteine lipidation. Substrate is bound by residues K61, D62, H131–D133, and N213–E214. The active-site Proton donor is the E214. Residues C224 and C229 are joined by a disulfide bond. Residues N265, Q298, and Y302 each coordinate substrate. C294 and C313 form a disulfide bridge. E339 serves as the catalytic Nucleophile. W365 is a binding site for substrate. The segment at N467–S492 is disordered.

This sequence belongs to the glycosyl hydrolase 5 (cellulase A) family.

It localises to the secreted. It is found in the membrane. The enzyme catalyses an oligoglycosyl-(1-&gt;4)-beta-D-glucosyl-(1&lt;-&gt;1)-ceramide + H2O = an oligoglycosyl-(1-&gt;4)-D-glucose + an N-acyl-sphingoid base. It carries out the reaction a ganglioside GM3 + H2O = N-acetyl-alpha-neuraminosyl-(2-&gt;3)-beta-D-galactosyl-(1-&gt;4)-D-glucose + an N-acyl-sphingoid base. It catalyses the reaction a ganglioside GM1 + H2O = beta-D-Gal-(1-&gt;3)-beta-D-GalNAc-(1-&gt;4)-[alpha-Neu5Ac-(2-&gt;3)]-beta-D-Gal-(1-&gt;4)-D-Glc + an N-acyl-sphingoid base. The catalysed reaction is a ganglioside Fuc-GM1 + H2O = alpha-Fuc-(1-&gt;2)-beta-Gal-(1-&gt;3)-beta-GalNAc-(1-&gt;4)-[alpha-Neu5Ac-(2-&gt;3)]-beta-Gal-(1-&gt;4)-Glc + an N-acyl-sphingoid base. The enzyme catalyses a beta-D-galactosyl-(1-&gt;4)-beta-D-glucosyl-(1&lt;-&gt;1)-ceramide + H2O = lactose + an N-acyl-sphingoid base. Hydrolyzes glycosphingolipids; exhibits broad substrate specificity including monosialodihexosylganglioside (GM3), monosialotetrahexosylganglioside (GM1), fucosyl-GM1, lactosylceramide, globotriosylceramide, globotetraosylceramide, ganglioside GD1a, and ganglioside GD1b. No activity towards glucosylceramide and galactosylceramide. This chain is Endoglycoceramidase I, found in Rhodococcus hoagii (strain 103S) (Rhodococcus equi).